Reading from the N-terminus, the 400-residue chain is Malonyl CoA-acyl carrier protein transacylase (400 aa).

Catalysis depends on residues Ser92 and His201.

It belongs to the FabD family.

The enzyme catalyses holo-[ACP] + malonyl-CoA = malonyl-[ACP] + CoA. In terms of biological role, is involved in the mycosubtilin synthetase assembly, by catalyzing the transfer of malonyl groups to a specific acyl-carrier-protein domain on MycA. The sequence is that of Malonyl CoA-acyl carrier protein transacylase (fenF) from Bacillus subtilis.